The chain runs to 342 residues: Immune-associated nucleotide-binding protein 9 (342 aa).

One can recognise an AIG1-type G domain in the interval 22 to 229 (NPKRTLVLVG…YSDELFHELQ (208 aa)). The segment at 31–38 (GRTGNGKS) is G1. GTP is bound by residues 31-39 (GRTGNGKSA) and Ser-52. The tract at residues 58 to 62 (GVTST) is G2. Residues 80-83 (DTPG) are G3. The segment at 149–152 (TGGD) is G4. The interval 188 to 190 (NNK) is G5. Residue Asn-189 participates in GTP binding. A coiled-coil region spans residues 276–342 (ETKLRDTAKR…QKKLGKCINL (67 aa)).

Belongs to the TRAFAC class TrmE-Era-EngA-EngB-Septin-like GTPase superfamily. AIG1/Toc34/Toc159-like paraseptin GTPase family. IAN subfamily. As to expression, mainly expressed in leaves.

The sequence is that of Immune-associated nucleotide-binding protein 9 from Arabidopsis thaliana (Mouse-ear cress).